Here is a 21-residue protein sequence, read N- to C-terminus: Hemocyanin subunit 4 (21 aa).

This sequence belongs to the tyrosinase family. Hemocyanin subfamily. In terms of tissue distribution, hemolymph.

It localises to the secreted. The protein resides in the extracellular space. Functionally, hemocyanins are copper-containing oxygen carriers occurring freely dissolved in the hemolymph of many mollusks and arthropods. This chain is Hemocyanin subunit 4, found in Maja squinado (Mediterranean spider crab).